Consider the following 201-residue polypeptide: PLASMODESMATA CALLOSE-BINDING PROTEIN 1 (201 aa).

The first 19 residues, Met-1–Ala-19, serve as a signal peptide directing secretion. A disulfide bridge connects residues Cys-22 and Cys-84. Low complexity predominate over residues Ser-107–Pro-141. Residues Ser-107–Ile-164 are disordered. Over residues Val-150–Gly-161 the composition is skewed to gly residues. Asn-154 carries an N-linked (GlcNAc...) asparagine glycan. The GPI-anchor amidated serine moiety is linked to residue Ser-172. Positions Ser-173 to Leu-201 are cleaved as a propeptide — removed in mature form. Asn-179 carries an N-linked (GlcNAc...) asparagine glycan.

In terms of processing, contains two additional disulfide bonds. In terms of tissue distribution, expressed in the shoot apical region and in young leaves but also detected in the laminar and vasculature of mature leaves.

It is found in the cell membrane. It localises to the cell junction. Its subcellular location is the plasmodesma. In terms of biological role, able to bind (1-&gt;3)-beta-D-glucans (laminarin). Probably involved in cell-to-cell trafficking regulation. This Arabidopsis thaliana (Mouse-ear cress) protein is PLASMODESMATA CALLOSE-BINDING PROTEIN 1 (PDCB1).